The following is a 769-amino-acid chain: Serine protease HtrA-like (769 aa).

The segment covering 1-20 has biased composition (basic residues); that stretch reads MDIGKKHVIPKSQYRRKRRE. Residues 1-388 are disordered; that stretch reads MDIGKKHVIP…KKATSKLNKG (388 aa). Basic and acidic residues-rich tracts occupy residues 21–64, 71–87, and 96–108; these read FFHN…ERFK, LEQRNRDVNENKAEESK, and YNKDHYLTDDVSK. Positions 126–139 are enriched in polar residues; sequence YEQNTEATLSTNST. A compositionally biased stretch (basic and acidic residues) spans 140–186; it reads DKVESTDMRKLSSDKNKVGHEEQHVLSKPSEHDKETRIDFESSRTDS. Polar residues predominate over residues 247–262; sequence QQSQNEQTKTYTYGDS. 2 stretches are compositionally biased toward basic and acidic residues: residues 264–296 and 310–330; these read QNDKSNHENDLSHHTPSISDDKDYVMREDHIVD and KIDDDRKLDEKIHVEDKHKQN. The span at 331–347 shows a compositional bias: polar residues; the sequence is ADSSETVGYQSQSSASH. Basic and acidic residues predominate over residues 348–364; sequence RSTEKRNMAINDHDKLN. Residues 366–388 are compositionally biased toward polar residues; the sequence is QKPNTKTSANNNQKKATSKLNKG. Residues 410–430 traverse the membrane as a helical segment; it reads LVILMGIIILIVILNAIFNNV. Catalysis depends on charge relay system residues histidine 504, aspartate 534, and serine 619. Positions 680 to 733 constitute a PDZ domain; sequence IASLNSFERQAVKLLGKVKNGVVVDQVDNNGLADQSGLKKGDVITELDGKLLED.

The protein belongs to the peptidase S1C family.

Its subcellular location is the cell membrane. This Staphylococcus aureus (strain MRSA252) protein is Serine protease HtrA-like.